The primary structure comprises 235 residues: Aspartate/glutamate leucyltransferase (235 aa).

The protein belongs to the R-transferase family. Bpt subfamily.

It is found in the cytoplasm. It catalyses the reaction N-terminal L-glutamyl-[protein] + L-leucyl-tRNA(Leu) = N-terminal L-leucyl-L-glutamyl-[protein] + tRNA(Leu) + H(+). It carries out the reaction N-terminal L-aspartyl-[protein] + L-leucyl-tRNA(Leu) = N-terminal L-leucyl-L-aspartyl-[protein] + tRNA(Leu) + H(+). Its function is as follows. Functions in the N-end rule pathway of protein degradation where it conjugates Leu from its aminoacyl-tRNA to the N-termini of proteins containing an N-terminal aspartate or glutamate. The polypeptide is Aspartate/glutamate leucyltransferase (Shewanella putrefaciens (strain CN-32 / ATCC BAA-453)).